Consider the following 210-residue polypeptide: Probable GTP-binding protein EngB (210 aa).

The EngB-type G domain occupies 25–199; sequence TGIEVAFAGR…RQKLDTWFSE (175 aa). Residues 33–40, 60–64, 78–81, 145–148, and 178–180 contribute to the GTP site; these read GRSNAGKS, GRTQL, DLPG, TKAD, and FSS. Residues Ser40 and Thr62 each coordinate Mg(2+).

It belongs to the TRAFAC class TrmE-Era-EngA-EngB-Septin-like GTPase superfamily. EngB GTPase family. It depends on Mg(2+) as a cofactor.

In terms of biological role, necessary for normal cell division and for the maintenance of normal septation. The sequence is that of Probable GTP-binding protein EngB from Shigella boydii serotype 4 (strain Sb227).